The following is a 445-amino-acid chain: MIRLETRFASSFVNSRKFESFLTEAESSRRTLHSFQGKGNEYLGWLNLPKEIKESEIEKIIQVAQRLRDSSEVIVVIGIGGSYLGSRAVLEATLPFFRRSSKGNPEIFFAGHHLESRYLSELMEYLKDRDFSVNVISKSGTTTEPAIAFRLFWELLRKKYGASAASRVVATTDFSKGTLKTFANVEGFETFTIPDNVGGRYSVLTPVGLFPLAAAGIPIRKFILGSQNILKDLHAETDPVRNPATYYSAFRNYFLSEGRHIEILANFNPSLRYISEWWKQLFGESEGKENKGIFPASMDFTTDLHSLGQYVQEGKRILFETVLSPSDVHSNLILRPTPDNLDSLNFLSGNTLGHVNEQARLGTLLAHADGGVPCLELIFPDISPESLGEVMYFFEYSCAISGYSLGVNPFDQPGVDAYKKNMFALLNKVGFEKEGDFLRKRILGN.

Catalysis depends on glutamate 284, which acts as the Proton donor. Residues histidine 305 and lysine 419 contribute to the active site.

This sequence belongs to the GPI family.

It is found in the cytoplasm. It carries out the reaction alpha-D-glucose 6-phosphate = beta-D-fructose 6-phosphate. The protein operates within carbohydrate biosynthesis; gluconeogenesis. Its pathway is carbohydrate degradation; glycolysis; D-glyceraldehyde 3-phosphate and glycerone phosphate from D-glucose: step 2/4. Its function is as follows. Catalyzes the reversible isomerization of glucose-6-phosphate to fructose-6-phosphate. The protein is Glucose-6-phosphate isomerase of Leptospira borgpetersenii serovar Hardjo-bovis (strain JB197).